The primary structure comprises 346 residues: Histidinol-phosphate aminotransferase (346 aa).

K209 is subject to N6-(pyridoxal phosphate)lysine.

The protein belongs to the class-II pyridoxal-phosphate-dependent aminotransferase family. Histidinol-phosphate aminotransferase subfamily. Homodimer. Pyridoxal 5'-phosphate is required as a cofactor.

The catalysed reaction is L-histidinol phosphate + 2-oxoglutarate = 3-(imidazol-4-yl)-2-oxopropyl phosphate + L-glutamate. The protein operates within amino-acid biosynthesis; L-histidine biosynthesis; L-histidine from 5-phospho-alpha-D-ribose 1-diphosphate: step 7/9. This is Histidinol-phosphate aminotransferase from Vibrio campbellii (strain ATCC BAA-1116).